The sequence spans 1732 residues: Serine/threonine-protein kinase MRCK alpha (1732 aa).

Positions 77–343 (FEILKVIGRG…IEDFKKHPFF (267 aa)) constitute a Protein kinase domain. ATP is bound by residues 83 to 91 (IGRGAFGEV) and lysine 106. Residue aspartate 201 is the Proton acceptor of the active site. Phosphoserine; by autocatalysis is present on residues serine 222 and serine 234. Threonine 240 carries the phosphothreonine; by autocatalysis modification. The region spanning 344–414 (SGIDWDNIRN…TSSCVLSDRS (71 aa)) is the AGC-kinase C-terminal domain. 3 coiled-coil regions span residues 437–670 (NNLA…KQKQ), 713–820 (SEIK…WEAQ), and 880–943 (LELQ…SEKG). The segment at 973-1002 (CTPAGKGRRIADSAPLPVHTPTLRKKGCPA) is disordered. The Phorbol-ester/DAG-type zinc-finger motif lies at 1012 to 1062 (THQFFVKSFTAPTKCHQCTSLMVGLIRQGCSCEVCGFSCHITCVNKAPTTC). Positions 1082–1201 (GTAYEGHVRI…WVGVLSELHK (120 aa)) constitute a PH domain. Serine 1127 is modified (phosphoserine). Residues 1227–1499 (IKTTQAAAII…RPLNTEGSLN (273 aa)) enclose the CNH domain. Serine 1545 is modified (phosphoserine). One can recognise a CRIB domain in the interval 1571-1584 (ISNPTNFNHIAHMG). The disordered stretch occupies residues 1592–1732 (LKDLPMNPRP…ESTDRGSWDP (141 aa)). Over residues 1604 to 1619 (SRTVFSGSVSIPSITK) the composition is skewed to polar residues. Phosphoserine occurs at positions 1611, 1613, 1629, 1651, 1664, 1669, 1693, 1719, and 1721. Over residues 1625–1640 (GRSMSASSGLSARSSA) the composition is skewed to low complexity. Residues 1665-1674 (PSEGSLSSGG) are compositionally biased toward low complexity.

This sequence belongs to the protein kinase superfamily. AGC Ser/Thr protein kinase family. DMPK subfamily. Homodimer and homotetramer via the coiled coil regions. Interacts tightly with GTP-bound but not GDP-bound CDC42. Forms a tripartite complex with MYO18A and LURAP1 with the latter acting as an adapter connecting CDC42BPA and MYO18A. LURAP1 binding results in activation of CDC42BPA by abolition of its negative autoregulation. Interacts with LURAP1. Interacts (via AGC-kinase C-terminal domain) with FAM89B/LRAP25 (via LRR repeat). Forms a tripartite complex with FAM89B/LRAP25 and LIMK1. It depends on Mg(2+) as a cofactor. Post-translationally, proteolytically cleaved by caspases upon apoptosis induction. The cleavage at Asp-478 by CASP3 increases its kinase activity (in vitro). Highly expressed in the brain and lung and present in lower levels in all other tissues tested.

It localises to the cytoplasm. The protein localises to the cell projection. Its subcellular location is the lamellipodium. The catalysed reaction is L-seryl-[protein] + ATP = O-phospho-L-seryl-[protein] + ADP + H(+). It catalyses the reaction L-threonyl-[protein] + ATP = O-phospho-L-threonyl-[protein] + ADP + H(+). Maintained in an inactive, closed conformation by an interaction between the kinase domain and the negative autoregulatory C-terminal coiled-coil region. Agonist binding to the phorbol ester binding site disrupts this, releasing the kinase domain to allow N-terminus-mediated dimerization and kinase activation by transautophosphorylation. Inhibited by chelerythrine chloride. In terms of biological role, serine/threonine-protein kinase which is an important downstream effector of CDC42 and plays a role in the regulation of cytoskeleton reorganization and cell migration. Regulates actin cytoskeletal reorganization via phosphorylation of PPP1R12A and MYL9/MLC2. In concert with MYO18A and LURAP1, is involved in modulating lamellar actomyosin retrograde flow that is crucial to cell protrusion and migration. Phosphorylates: PPP1R12C, LIMK1 and LIMK2. May play a role in TFRC-mediated iron uptake. In concert with FAM89B/LRAP25 mediates the targeting of LIMK1 to the lamellipodium resulting in its activation and subsequent phosphorylation of CFL1 which is important for lamellipodial F-actin regulation. Triggers the formation of an extrusion apical actin ring required for epithelial extrusion of apoptotic cells. The polypeptide is Serine/threonine-protein kinase MRCK alpha (Rattus norvegicus (Rat)).